A 196-amino-acid polypeptide reads, in one-letter code: Rho-related protein racL (196 aa).

Position 10 to 17 (10 to 17 (GDGAVGKT)) interacts with GTP. An Effector region motif is present at residues 32 to 40 (YQPTVFDNF). GTP-binding positions include 57–61 (DTAGQ) and 116–119 (TQND). Cysteine 193 is subject to Cysteine methyl ester. Cysteine 193 carries the S-geranylgeranyl cysteine lipid modification. A propeptide spans 194–196 (IIL) (removed in mature form).

This sequence belongs to the small GTPase superfamily. Rho family.

The protein resides in the cell membrane. This is Rho-related protein racL (racL) from Dictyostelium discoideum (Social amoeba).